A 66-amino-acid chain; its full sequence is Large ribosomal subunit protein uL29 (66 aa).

This sequence belongs to the universal ribosomal protein uL29 family.

In Borreliella burgdorferi (strain ZS7) (Borrelia burgdorferi), this protein is Large ribosomal subunit protein uL29.